The primary structure comprises 591 residues: MRSHYCGDVNKSHVGQEVTLVGWVNRSRDLGGVIFLDLRDREGLVQVVYDPDLPDVFDVASSLRAEFCVQVKGVVRPRPDSQVNSQMKTGEIEVLGKALTIINAADPLPLSLDNHQNNSEEARLKYRYLDLRRPEMAQRLIFRAKVTSFVRRFMDGNGFLDIETPILTKATPEGARDYLVPSRTYKGQFFALPQSPQLFKQLLMMSGFDRYYQIVKCFRDEDLRADRQPEFTQIDIETSFMTSDQVMETTERMIRNLFLELMNVDLGDFPKMTWDEAMRRFGSDKPDLRNPLELVDVADLLKAVEFAVFSGPANDEEGRVAALRIPGGAELSRKQIDDYTKFVGIYGARGLAWMKVNNLAAGVEGIQSPVAKFLNEDIIKEIIARTKAADGDIIFFGADKANVVAESMGALRLKAGEDFKLLEGEWRPLWVVDFPMFEKADGRFYAVHHPFTAPRGVTAAELEASPGKAVSDAYDMVLNGVELGGGSVRIHNGDMQSTVFRILGIDDEEAKEKFGFLLDALRFGTPPHAGLAFGLDRLVMLMTGASSIRDVMAFPKTTTAACPLTNAPGHANPDQLVELGIAVLPKEPKQD.

Glu-173 contributes to the L-aspartate binding site. The tract at residues 197 to 200 (QLFK) is aspartate. Arg-219 is a binding site for L-aspartate. Residues 219 to 221 (RDE) and Gln-228 contribute to the ATP site. An L-aspartate-binding site is contributed by His-448. Position 482 (Glu-482) interacts with ATP. Arg-489 serves as a coordination point for L-aspartate. 534-537 (GLDR) contacts ATP.

It belongs to the class-II aminoacyl-tRNA synthetase family. Type 1 subfamily. As to quaternary structure, homodimer.

Its subcellular location is the cytoplasm. It catalyses the reaction tRNA(Asp) + L-aspartate + ATP = L-aspartyl-tRNA(Asp) + AMP + diphosphate. Catalyzes the attachment of L-aspartate to tRNA(Asp) in a two-step reaction: L-aspartate is first activated by ATP to form Asp-AMP and then transferred to the acceptor end of tRNA(Asp). This Shewanella amazonensis (strain ATCC BAA-1098 / SB2B) protein is Aspartate--tRNA ligase.